Here is a 362-residue protein sequence, read N- to C-terminus: Protein-glutamate methylesterase/protein-glutamine glutaminase (362 aa).

One can recognise a Response regulatory domain in the interval 10-127 (RVLVVDDSAF…SLNMHVARDE (118 aa)). Aspartate 61 is subject to 4-aspartylphosphate. A CheB-type methylesterase domain is found at 173–362 (RLPRRLVLIG…DAITRAVGEG (190 aa)). Catalysis depends on residues serine 184, histidine 211, and aspartate 304.

This sequence belongs to the CheB family. Post-translationally, phosphorylated by CheA. Phosphorylation of the N-terminal regulatory domain activates the methylesterase activity.

The protein resides in the cytoplasm. It carries out the reaction [protein]-L-glutamate 5-O-methyl ester + H2O = L-glutamyl-[protein] + methanol + H(+). The enzyme catalyses L-glutaminyl-[protein] + H2O = L-glutamyl-[protein] + NH4(+). Its function is as follows. Involved in chemotaxis. Part of a chemotaxis signal transduction system that modulates chemotaxis in response to various stimuli. Catalyzes the demethylation of specific methylglutamate residues introduced into the chemoreceptors (methyl-accepting chemotaxis proteins or MCP) by CheR. Also mediates the irreversible deamidation of specific glutamine residues to glutamic acid. The chain is Protein-glutamate methylesterase/protein-glutamine glutaminase from Symbiobacterium thermophilum (strain DSM 24528 / JCM 14929 / IAM 14863 / T).